The primary structure comprises 1403 residues: Centrosomal protein of 162 kDa (1403 aa).

The tract at residues 18-42 is disordered; sequence KELSDDSFENSDKTARQSKKEMKKK. 2 positions are modified to phosphoserine: Ser-157 and Ser-160. The disordered stretch occupies residues 170–231; the sequence is QANAELTDDE…EKISVPKQEE (62 aa). The span at 208–231 shows a compositional bias: basic and acidic residues; it reads TKDEEMPSKENSKSEKISVPKQEE. Phosphoserine occurs at positions 474 and 475. The disordered stretch occupies residues 476–504; the sequence is EEEGAVMGKQVPYKKARSAPPLLKRKPQS. Over residues 487–502 the composition is skewed to basic residues; that stretch reads PYKKARSAPPLLKRKP. 4 coiled-coil regions span residues 617–670, 698–1121, 1171–1206, and 1235–1386; these read KRVQ…QDNY, VTGE…MLSN, EVLQENYRLKNELEGLISEKNELKMKSEAVMNQFEN, and CQNA…LHRQ.

Belongs to the CEP162 family. Interacts with CEP290. Interacts with CPNE4. Interacts with alpha-tubulin.

The protein localises to the cytoplasm. It is found in the cytoskeleton. It localises to the microtubule organizing center. The protein resides in the centrosome. Its subcellular location is the centriole. The protein localises to the spindle. It is found in the nucleus. Functionally, required to promote assembly of the transition zone in primary cilia. Acts by specifically recognizing and binding the axonemal microtubule. Localizes to the distal ends of centrioles before ciliogenesis and directly binds to axonemal microtubule, thereby promoting and restricting transition zone formation specifically at the cilia base. Required to mediate CEP290 association with microtubules. The chain is Centrosomal protein of 162 kDa (CEP162) from Homo sapiens (Human).